The following is a 392-amino-acid chain: Phosphopentomutase (392 aa).

Mn(2+) contacts are provided by D13, D286, H291, D327, H328, and H339.

Belongs to the phosphopentomutase family. It depends on Mn(2+) as a cofactor.

The protein localises to the cytoplasm. The enzyme catalyses 2-deoxy-alpha-D-ribose 1-phosphate = 2-deoxy-D-ribose 5-phosphate. It catalyses the reaction alpha-D-ribose 1-phosphate = D-ribose 5-phosphate. Its pathway is carbohydrate degradation; 2-deoxy-D-ribose 1-phosphate degradation; D-glyceraldehyde 3-phosphate and acetaldehyde from 2-deoxy-alpha-D-ribose 1-phosphate: step 1/2. In terms of biological role, isomerase that catalyzes the conversion of deoxy-ribose 1-phosphate (dRib-1-P) and ribose 1-phosphate (Rib-1-P) to deoxy-ribose 5-phosphate (dRib-5-P) and ribose 5-phosphate (Rib-5-P), respectively. This chain is Phosphopentomutase, found in Oceanobacillus iheyensis (strain DSM 14371 / CIP 107618 / JCM 11309 / KCTC 3954 / HTE831).